Here is a 317-residue protein sequence, read N- to C-terminus: Phospho-N-acetylmuramoyl-pentapeptide-transferase (317 aa).

9 helical membrane-spanning segments follow: residues 4–24 (LIYSVLIAFFIAMLEGPILIP), 49–69 (TPTMGGIIFILATFITMAVIV), 76–96 (AMIALYAFIGFGIIGAIDDTL), 112–132 (MILLLAISGIFAYYSANNPYI), 147–167 (LGVFYIPFIIVYFAATTNAVN), 186–206 (FLALVSFAMGHITLAVFCAIL), 223–243 (IFMGDTGSLALGGAIGAVAMI), 246–266 (LPLLVIIIGGIYVLEALSVIF), and 297–317 (RVVSVFCIVTVILCLVGFLSL).

Belongs to the glycosyltransferase 4 family. MraY subfamily. Mg(2+) serves as cofactor.

The protein resides in the cell membrane. It carries out the reaction UDP-N-acetyl-alpha-D-muramoyl-L-alanyl-gamma-D-glutamyl-meso-2,6-diaminopimeloyl-D-alanyl-D-alanine + di-trans,octa-cis-undecaprenyl phosphate = di-trans,octa-cis-undecaprenyl diphospho-N-acetyl-alpha-D-muramoyl-L-alanyl-D-glutamyl-meso-2,6-diaminopimeloyl-D-alanyl-D-alanine + UMP. The protein operates within cell wall biogenesis; peptidoglycan biosynthesis. Its function is as follows. Catalyzes the initial step of the lipid cycle reactions in the biosynthesis of the cell wall peptidoglycan: transfers peptidoglycan precursor phospho-MurNAc-pentapeptide from UDP-MurNAc-pentapeptide onto the lipid carrier undecaprenyl phosphate, yielding undecaprenyl-pyrophosphoryl-MurNAc-pentapeptide, known as lipid I. In Clostridium kluyveri (strain NBRC 12016), this protein is Phospho-N-acetylmuramoyl-pentapeptide-transferase.